The sequence spans 103 residues: Cytochrome c55X (103 aa).

Positions 1 to 17 (MARLALLLVLLAGTAVA) are cleaved as a signal peptide. Positions 36, 39, and 40 each coordinate heme c.

Binds 1 heme c group covalently per subunit.

It is found in the periplasm. Its function is as follows. Monoheme c-type cytochrome. The polypeptide is Cytochrome c55X (nirC) (Paracoccus denitrificans (strain Pd 1222)).